The sequence spans 200 residues: Holliday junction resolvase RecU (200 aa).

A disordered region spans residues Met-1–His-25. Positions 85, 87, 100, and 119 each coordinate Mg(2+).

This sequence belongs to the RecU family. The cofactor is Mg(2+).

The protein resides in the cytoplasm. It catalyses the reaction Endonucleolytic cleavage at a junction such as a reciprocal single-stranded crossover between two homologous DNA duplexes (Holliday junction).. Its function is as follows. Endonuclease that resolves Holliday junction intermediates in genetic recombination. Cleaves mobile four-strand junctions by introducing symmetrical nicks in paired strands. Promotes annealing of linear ssDNA with homologous dsDNA. Required for DNA repair, homologous recombination and chromosome segregation. The chain is Holliday junction resolvase RecU from Bacillus cereus (strain ZK / E33L).